The chain runs to 474 residues: Serine/threonine-protein kinase ksp1 (474 aa).

Residues 9–280 form the Protein kinase domain; that stretch reads YKVERPLNKG…EAVLAVTKWT (272 aa). Residues 15-23 and Lys43 each bind ATP; that span reads LNKGSYGTV. Catalysis depends on Asp137, which acts as the Proton acceptor. The disordered stretch occupies residues 345 to 373; sequence VDENISTSSSPRSPASLAPVNNSERSYDS. A compositionally biased stretch (low complexity) spans 350–363; that stretch reads STSSSPRSPASLAP. Phosphoserine occurs at positions 353, 354, 357, 378, 404, and 413.

The protein belongs to the protein kinase superfamily. Ser/Thr protein kinase family.

The protein resides in the cytoplasm. It localises to the nucleus. It carries out the reaction L-seryl-[protein] + ATP = O-phospho-L-seryl-[protein] + ADP + H(+). It catalyses the reaction L-threonyl-[protein] + ATP = O-phospho-L-threonyl-[protein] + ADP + H(+). In Schizosaccharomyces pombe (strain 972 / ATCC 24843) (Fission yeast), this protein is Serine/threonine-protein kinase ksp1 (ksp1).